The primary structure comprises 369 residues: Methionine import ATP-binding protein MetN 1 (369 aa).

The ABC transporter domain maps to 29-265 (IRLHGLGKRY…PRHAVTRSLL (237 aa)). 62–69 (GRSGAGKS) contributes to the ATP binding site.

Belongs to the ABC transporter superfamily. Methionine importer (TC 3.A.1.24) family. As to quaternary structure, the complex is composed of two ATP-binding proteins (MetN), two transmembrane proteins (MetI) and a solute-binding protein (MetQ).

The protein localises to the cell inner membrane. It carries out the reaction L-methionine(out) + ATP + H2O = L-methionine(in) + ADP + phosphate + H(+). It catalyses the reaction D-methionine(out) + ATP + H2O = D-methionine(in) + ADP + phosphate + H(+). Part of the ABC transporter complex MetNIQ involved in methionine import. Responsible for energy coupling to the transport system. In Pseudomonas aeruginosa (strain ATCC 15692 / DSM 22644 / CIP 104116 / JCM 14847 / LMG 12228 / 1C / PRS 101 / PAO1), this protein is Methionine import ATP-binding protein MetN 1.